The following is a 737-amino-acid chain: uncharacterized protein (737 aa).

7 helical membrane-spanning segments follow: residues 11–31 (LSLL…LRPL), 36–56 (ETKH…LTFF), 60–80 (WFVT…ILFY), 118–138 (TLLF…WVIY), 142–162 (ILFF…FTPY), 164–184 (ATFA…LLYL), and 200–220 (VLKW…FGLA). The interval 556–611 (PAQFTSSDTKDSGSDSSSSPKKAKEKQKEEKKQPQKEEKQKEKREPAVSKKPSASH) is disordered. Residues 581–603 (KQKEEKKQPQKEEKQKEKREPAV) show a composition bias toward basic and acidic residues. The chain crosses the membrane as a helical span at residues 618-638 (LYAALAVLAVLLVAAVLLYVF).

Its subcellular location is the cell membrane. This is an uncharacterized protein from Bacillus subtilis (strain 168).